We begin with the raw amino-acid sequence, 157 residues long: MHFLDESFWLAISFIIFVYLIYRPAKKAILKSLDMKVLEVQERVLKAEKLKDDAKLLFEQTEEQIKNLEALQLQMTKENNEITEKIVQEKTKEIEEFLEHKKVETIKLIESQKLLASKELQDEFSDEVVKLVSEYFHSTKNNNLSETDIAKNLMDKV.

Residues 1–21 form a helical membrane-spanning segment; sequence MHFLDESFWLAISFIIFVYLI.

This sequence belongs to the ATPase B chain family. F-type ATPases have 2 components, F(1) - the catalytic core - and F(0) - the membrane proton channel. F(1) has five subunits: alpha(3), beta(3), gamma(1), delta(1), epsilon(1). F(0) has three main subunits: a(1), b(2) and c(10-14). The alpha and beta chains form an alternating ring which encloses part of the gamma chain. F(1) is attached to F(0) by a central stalk formed by the gamma and epsilon chains, while a peripheral stalk is formed by the delta and b chains.

Its subcellular location is the cell inner membrane. Functionally, f(1)F(0) ATP synthase produces ATP from ADP in the presence of a proton or sodium gradient. F-type ATPases consist of two structural domains, F(1) containing the extramembraneous catalytic core and F(0) containing the membrane proton channel, linked together by a central stalk and a peripheral stalk. During catalysis, ATP synthesis in the catalytic domain of F(1) is coupled via a rotary mechanism of the central stalk subunits to proton translocation. Component of the F(0) channel, it forms part of the peripheral stalk, linking F(1) to F(0). This is ATP synthase subunit b from Rickettsia bellii (strain RML369-C).